A 309-amino-acid polypeptide reads, in one-letter code: UDP-N-acetylenolpyruvoylglucosamine reductase (309 aa).

The region spanning 34–221 (RVGGPAQVLF…TAAREAAQPI (188 aa)) is the FAD-binding PCMH-type domain. Residue Arg-179 is part of the active site. Catalysis depends on Ser-228, which acts as the Proton donor. Glu-298 is an active-site residue.

Belongs to the MurB family. FAD is required as a cofactor.

Its subcellular location is the cytoplasm. The enzyme catalyses UDP-N-acetyl-alpha-D-muramate + NADP(+) = UDP-N-acetyl-3-O-(1-carboxyvinyl)-alpha-D-glucosamine + NADPH + H(+). It participates in cell wall biogenesis; peptidoglycan biosynthesis. Functionally, cell wall formation. The protein is UDP-N-acetylenolpyruvoylglucosamine reductase of Methylorubrum populi (strain ATCC BAA-705 / NCIMB 13946 / BJ001) (Methylobacterium populi).